The sequence spans 198 residues: Small ribosomal subunit protein uS4 (198 aa).

The S4 RNA-binding domain occupies 91–154 (SRLDNVVYRL…KNLNIVQEAL (64 aa)).

It belongs to the universal ribosomal protein uS4 family. As to quaternary structure, part of the 30S ribosomal subunit. Contacts protein S5. The interaction surface between S4 and S5 is involved in control of translational fidelity.

In terms of biological role, one of the primary rRNA binding proteins, it binds directly to 16S rRNA where it nucleates assembly of the body of the 30S subunit. Its function is as follows. With S5 and S12 plays an important role in translational accuracy. This Aster yellows witches'-broom phytoplasma (strain AYWB) protein is Small ribosomal subunit protein uS4.